We begin with the raw amino-acid sequence, 252 residues long: Chaperone protein AggD (252 aa).

The N-terminal stretch at 1–22 (MKIRRIVSTIAIALSVFTFAHA) is a signal peptide.

It belongs to the periplasmic pilus chaperone family.

The protein localises to the periplasm. In terms of biological role, involved in the biogenesis of the AAF/I fimbriae. This Escherichia coli protein is Chaperone protein AggD (aggD).